Reading from the N-terminus, the 60-residue chain is Large ribosomal subunit protein uL30 (60 aa).

It belongs to the universal ribosomal protein uL30 family. As to quaternary structure, part of the 50S ribosomal subunit.

This chain is Large ribosomal subunit protein uL30, found in Carboxydothermus hydrogenoformans (strain ATCC BAA-161 / DSM 6008 / Z-2901).